Reading from the N-terminus, the 158-residue chain is Transcription elongation factor GreA (158 aa).

Residues 53–73 are a coiled coil; it reads EQQSFIEGRIQEIEGKLSNAQ.

This sequence belongs to the GreA/GreB family.

Functionally, necessary for efficient RNA polymerase transcription elongation past template-encoded arresting sites. The arresting sites in DNA have the property of trapping a certain fraction of elongating RNA polymerases that pass through, resulting in locked ternary complexes. Cleavage of the nascent transcript by cleavage factors such as GreA or GreB allows the resumption of elongation from the new 3'terminus. GreA releases sequences of 2 to 3 nucleotides. This Halorhodospira halophila (strain DSM 244 / SL1) (Ectothiorhodospira halophila (strain DSM 244 / SL1)) protein is Transcription elongation factor GreA.